We begin with the raw amino-acid sequence, 152 residues long: Ribosome maturation factor RimP (152 aa).

This sequence belongs to the RimP family.

It is found in the cytoplasm. Required for maturation of 30S ribosomal subunits. The sequence is that of Ribosome maturation factor RimP from Porphyromonas gingivalis (strain ATCC 33277 / DSM 20709 / CIP 103683 / JCM 12257 / NCTC 11834 / 2561).